Consider the following 329-residue polypeptide: UDP-N-acetylenolpyruvoylglucosamine reductase (329 aa).

An FAD-binding PCMH-type domain is found at 28–192 (RVGGPADLLC…ARVEVRLHPG (165 aa)). Residue arginine 172 is part of the active site. Serine 221 acts as the Proton donor in catalysis. Glutamate 291 is an active-site residue. A disordered region spans residues 307 to 329 (DGHAAAGGGPGAASGGVRPPEAT). Gly residues predominate over residues 311–320 (AAGGGPGAAS).

Belongs to the MurB family. Requires FAD as cofactor.

It localises to the cytoplasm. It carries out the reaction UDP-N-acetyl-alpha-D-muramate + NADP(+) = UDP-N-acetyl-3-O-(1-carboxyvinyl)-alpha-D-glucosamine + NADPH + H(+). It functions in the pathway cell wall biogenesis; peptidoglycan biosynthesis. Functionally, cell wall formation. In Anaeromyxobacter dehalogenans (strain 2CP-1 / ATCC BAA-258), this protein is UDP-N-acetylenolpyruvoylglucosamine reductase.